The chain runs to 345 residues: MTDKTSLSYKDAGVDIDAGNALVGRIKGVVKKTRRPEVMGGLGGFGALCALPQKYREPVLVSGTDGVGTKLRLSMDLKRHDTIGIDLVAMCVNDLVVQGAEPLFFLDYYATGKLDVDTASAVISGIAEGCLQSGCSLVGGETAEMPGMYHGEDYDVAGFCVGVVEKSEIIDGSKVSDGDVLIALGSSGPHSNGYSLVRKILEVSGCDPQTTELDGKPLADHLLAPTRIYVKSVLELIEKVDVHAIAHLTGGGFWENIPRVLPDNTQAVIDESSWQWPEVFNWLQTAGNVERHEMYRTFNCGVGMIIALPAPEVDKALALLNANGENAWKIGIIKASDSEQRVVIE.

It belongs to the AIR synthase family.

It localises to the cytoplasm. It carries out the reaction 2-formamido-N(1)-(5-O-phospho-beta-D-ribosyl)acetamidine + ATP = 5-amino-1-(5-phospho-beta-D-ribosyl)imidazole + ADP + phosphate + H(+). The protein operates within purine metabolism; IMP biosynthesis via de novo pathway; 5-amino-1-(5-phospho-D-ribosyl)imidazole from N(2)-formyl-N(1)-(5-phospho-D-ribosyl)glycinamide: step 2/2. This is Phosphoribosylformylglycinamidine cyclo-ligase from Escherichia coli O7:K1 (strain IAI39 / ExPEC).